A 428-amino-acid polypeptide reads, in one-letter code: MHDIRAIRENPEAFDRDLERRGLAPLSAELIALDDARKGAVSAAQAAQERRNALSKEIGAAKKAKDEARATELMAEVARLKEEAPGLEAAQGEAAKALDERLAAIPNRPKDDVPPGADEHGNVEYRRFDSSRERLAQGRQHFELGEATGLMDFEAAAKLSGSRFVVLKGQLARLERALGQFMLDLHTGEHGYTEVVPPVLVREEAMFGTAQLPKFRDDQFAAGENFWLIPTAEVPLTNLVRESILAEDELPLRFTALTPCFRAEAGAAGRDTRGMLRQHQFNKVELVSITAPEKSAEEHERMLACAEAVLQKLDLTYRVMTLCTGDMGFASQKTYDIEVWVPGQQTYREISSCSVCGEFQARRMNARYRAKEGRGVGFVHTLNGSGVAVGRALIAVMENYQNPDGSVTIPSALQPYMGGLTRIEGPKN.

Residue 231–233 (TAE) participates in L-serine binding. 262-264 (RAE) is an ATP binding site. Glutamate 285 is an L-serine binding site. 349–352 (EISS) is an ATP binding site. An L-serine-binding site is contributed by serine 385.

It belongs to the class-II aminoacyl-tRNA synthetase family. Type-1 seryl-tRNA synthetase subfamily. In terms of assembly, homodimer. The tRNA molecule binds across the dimer.

It is found in the cytoplasm. The enzyme catalyses tRNA(Ser) + L-serine + ATP = L-seryl-tRNA(Ser) + AMP + diphosphate + H(+). It carries out the reaction tRNA(Sec) + L-serine + ATP = L-seryl-tRNA(Sec) + AMP + diphosphate + H(+). The protein operates within aminoacyl-tRNA biosynthesis; selenocysteinyl-tRNA(Sec) biosynthesis; L-seryl-tRNA(Sec) from L-serine and tRNA(Sec): step 1/1. Functionally, catalyzes the attachment of serine to tRNA(Ser). Is also able to aminoacylate tRNA(Sec) with serine, to form the misacylated tRNA L-seryl-tRNA(Sec), which will be further converted into selenocysteinyl-tRNA(Sec). The chain is Serine--tRNA ligase from Methylorubrum extorquens (strain PA1) (Methylobacterium extorquens).